The primary structure comprises 252 residues: Imidazole glycerol phosphate synthase subunit HisF (252 aa).

Catalysis depends on residues Asp-11 and Asp-130.

It belongs to the HisA/HisF family. In terms of assembly, heterodimer of HisH and HisF.

It is found in the cytoplasm. The catalysed reaction is 5-[(5-phospho-1-deoxy-D-ribulos-1-ylimino)methylamino]-1-(5-phospho-beta-D-ribosyl)imidazole-4-carboxamide + L-glutamine = D-erythro-1-(imidazol-4-yl)glycerol 3-phosphate + 5-amino-1-(5-phospho-beta-D-ribosyl)imidazole-4-carboxamide + L-glutamate + H(+). It functions in the pathway amino-acid biosynthesis; L-histidine biosynthesis; L-histidine from 5-phospho-alpha-D-ribose 1-diphosphate: step 5/9. IGPS catalyzes the conversion of PRFAR and glutamine to IGP, AICAR and glutamate. The HisF subunit catalyzes the cyclization activity that produces IGP and AICAR from PRFAR using the ammonia provided by the HisH subunit. In Lacticaseibacillus casei (strain BL23) (Lactobacillus casei), this protein is Imidazole glycerol phosphate synthase subunit HisF.